The primary structure comprises 29 residues: Frontoxin VI (29 aa).

Cysteine 3 and cysteine 24 are oxidised to a cystine.

Expressed by the venom gland.

It localises to the secreted. Functionally, binds to muscle nicotinic acetylcholine receptor (nAChR) and inhibit acetylcholine from binding to the receptor, thereby impairing neuromuscular transmission. This Micrurus frontalis (Coral snake) protein is Frontoxin VI.